A 313-amino-acid polypeptide reads, in one-letter code: tRNA dimethylallyltransferase (313 aa).

An ATP-binding site is contributed by G11–T18. Substrate is bound at residue T13–T18. 3 interaction with substrate tRNA regions span residues D36–L39, Q160–R164, and R243–R248.

Belongs to the IPP transferase family. In terms of assembly, monomer. Mg(2+) is required as a cofactor.

It catalyses the reaction adenosine(37) in tRNA + dimethylallyl diphosphate = N(6)-dimethylallyladenosine(37) in tRNA + diphosphate. Catalyzes the transfer of a dimethylallyl group onto the adenine at position 37 in tRNAs that read codons beginning with uridine, leading to the formation of N6-(dimethylallyl)adenosine (i(6)A). This chain is tRNA dimethylallyltransferase, found in Neisseria meningitidis serogroup A / serotype 4A (strain DSM 15465 / Z2491).